The primary structure comprises 201 residues: MNPEYDYLFKLLLIGDSGVGKSCLLLRFADDTYTESYISTIGVDFKIRTIELDGKTIKLQIWDTAGQERFRTITSSYYRGAHGIIVVYDVTDRESYANVKQWLQEIDRYASENVNKLLVGNKSDLTTKKVVDNTTAKEFADSLGIPFLETSAKNATNVEQAFMTMAAEIKKRMGPGAASGGERPNLKIDSTPVKPAGGGCC.

The residue at position 1 (M1) is an N-acetylmethionine. Residues S17, G18, V19, G20, K21, S22, C23, Y33, T34, E35, S36, S39, and T40 each contribute to the GTP site. S22 contacts Mg(2+). The Switch 1 signature appears at 30–45 (DDTYTESYISTIGVDF). Positions 40 and 63 each coordinate Mg(2+). Residues 64 to 83 (TAGQERFRTITSSYYRGAHG) are switch 2 region; required for interaction with REP1/CHM. Positions 65–80 (AGQERFRTITSSYYRG) match the Switch 2 motif. Positions 66, 121, 122, 124, 151, 152, and 153 each coordinate GTP. The interval 174 to 201 (GPGAASGGERPNLKIDSTPVKPAGGGCC) is disordered. 2 S-geranylgeranyl cysteine lipidation sites follow: C200 and C201. Position 201 is a cysteine methyl ester (C201).

Belongs to the small GTPase superfamily. Rab family. As to quaternary structure, interacts with MICAL1 and MICAL2. Interacts (in GTP-bound form) with MICALCL, MICAL1 and MILCAL3. Interacts with GDI1; the interaction requires the GDP-bound state. Interacts with CHM/REP1; the interaction requires the GDP-bound form and is necessary for prenylation by GGTase II. Interacts with RabGAP TBC1D20. Interacts (in GDP-bound form) with lipid phosphatase MTMR6 (via GRAM domain); the interaction regulates MTMR6 recruitment to the endoplasmic reticulum-Golgi intermediate compartment. Interacts (in GDP-bound form) with lipid phosphatase MTMR7. Mg(2+) is required as a cofactor. In terms of processing, prenylated; by GGTase II, only after interaction of the substrate with Rab escort protein 1 (REP1).

The protein resides in the cytoplasm. Its subcellular location is the membrane. The protein localises to the preautophagosomal structure membrane. It localises to the perinuclear region. It carries out the reaction GTP + H2O = GDP + phosphate + H(+). Regulated by guanine nucleotide exchange factors (GEFs) which promote the exchange of bound GDP for free GTP. Regulated by GTPase activating proteins (GAPs) including TBC1D20 which increases the GTP hydrolysis activity. Inhibited by GDP dissociation inhibitors (GDIs). The small GTPases Rab are key regulators of intracellular membrane trafficking, from the formation of transport vesicles to their fusion with membranes. Rabs cycle between an inactive GDP-bound form and an active GTP-bound form that is able to recruit to membranes different set of downstream effectors directly responsible for vesicle formation, movement, tethering and fusion. Plays a role in the initial events of the autophagic vacuole development which take place at specialized regions of the endoplasmic reticulum. Regulates vesicular transport between the endoplasmic reticulum and successive Golgi compartments. Required to modulate the compacted morphology of the Golgi. Promotes the recruitment of lipid phosphatase MTMR6 to the endoplasmic reticulum-Golgi intermediate compartment. The sequence is that of Ras-related protein Rab-1B (RAB1B) from Macaca fascicularis (Crab-eating macaque).